The sequence spans 202 residues: GTP cyclohydrolase-2 (202 aa).

48–52 (RLHSE) contacts GTP. Zn(2+)-binding residues include Cys-53, Cys-64, and Cys-66. GTP-binding positions include Gln-69, 91 to 93 (EGR), and Thr-113. The Proton acceptor role is filled by Asp-125. Arg-127 serves as the catalytic Nucleophile. Residues Thr-148 and Lys-153 each contribute to the GTP site.

It belongs to the GTP cyclohydrolase II family. Requires Zn(2+) as cofactor.

It carries out the reaction GTP + 4 H2O = 2,5-diamino-6-hydroxy-4-(5-phosphoribosylamino)-pyrimidine + formate + 2 phosphate + 3 H(+). It participates in cofactor biosynthesis; riboflavin biosynthesis; 5-amino-6-(D-ribitylamino)uracil from GTP: step 1/4. Its function is as follows. Catalyzes the conversion of GTP to 2,5-diamino-6-ribosylamino-4(3H)-pyrimidinone 5'-phosphate (DARP), formate and pyrophosphate. The chain is GTP cyclohydrolase-2 from Colwellia psychrerythraea (strain 34H / ATCC BAA-681) (Vibrio psychroerythus).